Consider the following 96-residue polypeptide: Co-chaperonin GroES (96 aa).

Belongs to the GroES chaperonin family. As to quaternary structure, heptamer of 7 subunits arranged in a ring. Interacts with the chaperonin GroEL.

It localises to the cytoplasm. Functionally, together with the chaperonin GroEL, plays an essential role in assisting protein folding. The GroEL-GroES system forms a nano-cage that allows encapsulation of the non-native substrate proteins and provides a physical environment optimized to promote and accelerate protein folding. GroES binds to the apical surface of the GroEL ring, thereby capping the opening of the GroEL channel. In Haemophilus influenzae (strain PittEE), this protein is Co-chaperonin GroES.